We begin with the raw amino-acid sequence, 238 residues long: Succinate dehydrogenase iron-sulfur subunit (238 aa).

The 2Fe-2S ferredoxin-type domain occupies 8 to 97 (YRYNPDVDDA…KIVIRPLPGL (90 aa)). C55, C60, and C75 together coordinate [2Fe-2S] cluster. Residues 139-169 (QREKLDGLYECILCACCSTSCPSFWWNPDKF) enclose the 4Fe-4S ferredoxin-type domain. [4Fe-4S] cluster contacts are provided by C149, C152, and C155. C159 provides a ligand contact to [3Fe-4S] cluster. A ubiquinone is bound at residue W164. The [3Fe-4S] cluster site is built by C206 and C212. C216 lines the [4Fe-4S] cluster pocket.

The protein belongs to the succinate dehydrogenase/fumarate reductase iron-sulfur protein family. Part of an enzyme complex containing four subunits: a flavoprotein, an iron-sulfur, cytochrome b-556, and a hydrophobic anchor protein. The complex forms trimers. The cofactor is [2Fe-2S] cluster. Requires [3Fe-4S] cluster as cofactor. [4Fe-4S] cluster is required as a cofactor.

It localises to the cell inner membrane. The enzyme catalyses a quinone + succinate = fumarate + a quinol. It functions in the pathway carbohydrate metabolism; tricarboxylic acid cycle; fumarate from succinate (bacterial route): step 1/1. In terms of biological role, two distinct, membrane-bound, FAD-containing enzymes are responsible for the catalysis of fumarate and succinate interconversion; the fumarate reductase is used in anaerobic growth, and the succinate dehydrogenase is used in aerobic growth. The protein is Succinate dehydrogenase iron-sulfur subunit (sdhB) of Escherichia coli (strain K12).